Here is a 391-residue protein sequence, read N- to C-terminus: Nucleosome assembly protein 1-like 1 (391 aa).

Basic and acidic residues predominate over residues 1 to 10 (MADIDNKEQS). Residues 1–32 (MADIDNKEQSELDQDLDDVEEVEEEETGEETK) form a disordered region. Ala-2 is subject to N-acetylalanine. Ser-10 is modified (phosphoserine). Over residues 11–28 (ELDQDLDDVEEVEEEETG) the composition is skewed to acidic residues. Residues Thr-62 and Thr-64 each carry the phosphothreonine modification. Residue Ser-69 is modified to Phosphoserine. Lys-116 bears the N6-acetyllysine mark. The NAP1L motif motif lies at 125 to 150 (YEPTEEECEWKPDEEDEISEELKEKA). Acidic residues predominate over residues 132–143 (CEWKPDEEDEIS). Positions 132-163 (CEWKPDEEDEISEELKEKAKVEDEKKDEEKED) are disordered. Ser-143 carries the phosphoserine modification. Positions 144 to 163 (EELKEKAKVEDEKKDEEKED) are enriched in basic and acidic residues. The Nuclear localization signal signature appears at 273-279 (IKKKQKH). The tract at residues 345-391 (EAIEDDDDDYDEEGEEADEEGEEEGDEENDPDYDPKKDQNPAECKQQ) is disordered. Residues 346-376 (AIEDDDDDYDEEGEEADEEGEEEGDEENDPD) are compositionally biased toward acidic residues. 2 positions are modified to 5-glutamyl polyglycine: Glu-359 and Glu-360. Residues 377–391 (YDPKKDQNPAECKQQ) show a composition bias toward basic and acidic residues. The residue at position 388 (Cys-388) is a Cysteine methyl ester. Residue Cys-388 is the site of S-farnesyl cysteine attachment. Residues 389–391 (KQQ) constitute a propeptide, removed in mature form.

This sequence belongs to the nucleosome assembly protein (NAP) family. Homodimer. The dimer binds strongly and sequentially to single and double H2A-H2B heterodimers. Interacts with ERCC6; this interaction increases ERCC6 processivity. Interacts with RAD54. Interacts with SETD1A. In terms of processing, polyglycylated by TTLL10 on glutamate residues, resulting in polyglycine chains on the gamma-carboxyl group. Both polyglutamylation and polyglycylation modifications can coexist on the same protein on adjacent residues, and lowering polyglycylation levels increases polyglutamylation, and reciprocally. Post-translationally, polyglutamylated by TTLL4 on glutamate residues, resulting in polyglutamate chains on the gamma-carboxyl group. Both polyglutamylation and polyglycylation modifications can coexist on the same protein on adjacent residues, and lowering polyglycylation levels increases polyglutamylation, and reciprocally.

It is found in the nucleus. The protein resides in the melanosome. Its subcellular location is the cytoplasm. Its function is as follows. Histone chaperone that plays a role in the nuclear import of H2A-H2B and nucleosome assembly. Also participates in several important DNA repair mechanisms: greatly enhances ERCC6-mediated chromatin remodeling which is essential for transcription-coupled nucleotide excision DNA repair. Also stimulates homologous recombination (HR) by RAD51 and RAD54 which is essential in mitotic DNA double strand break (DSB) repair. Plays a key role in the regulation of embryonic neurogenesis. Promotes the proliferation of neural progenitors and inhibits neuronal differentiation during cortical development. Regulates neurogenesis via the modulation of RASSF10; regulates RASSF10 expression by promoting SETD1A-mediated H3K4 methylation at the RASSF10 promoter. In Bos taurus (Bovine), this protein is Nucleosome assembly protein 1-like 1 (NAP1L1).